We begin with the raw amino-acid sequence, 129 residues long: Histone H3-like centromeric protein A (129 aa).

The segment covering 1-14 (MGPRRKPRTPRRRP) has biased composition (basic residues). The disordered stretch occupies residues 1–30 (MGPRRKPRTPRRRPSSPVPGPSRRSSRPGK). N,N,N-trimethylglycine is present on glycine 2. Serine 16, serine 22, and serine 57 each carry phosphoserine. The H3-like stretch occupies residues 30-129 (KRRKFLWLKE…RIRGIEGGLG (100 aa)). The tract at residues 64 to 105 (CGKFTRGVDLCWQAQALLALQEAAEAFLVHLFEDAYLLTLHA) is CATD.

It belongs to the histone H3 family. In terms of assembly, component of centromeric nucleosomes, where DNA is wrapped around a histone octamer core. The octamer contains two molecules each of H2A, H2B, CENPA and H4 assembled in one CENPA-H4 heterotetramer and two H2A-H2B heterodimers. CENPA modulates the DNA-binding characteristics of nucleosomes so that protruding DNA ends have higher flexibility than in nucleosomes containing conventional histone H3. Inhibits binding of histone H1 to nucleosomes, since histone H1 binds preferentially to rigid DNA linkers that protrude from nucleosomes. Nucleosomes containing CENPA also contain histone H2A variants such as MACROH2A and H2A.Z/H2AZ1. The CENPA-H4 heterotetramer is more compact and structurally more rigid than corresponding H3-H4 heterotetramers. Can assemble into nucleosomes that contain both CENPA and histone H3.3; these nucleosomes interact with a single CENPC chain. Heterotrimer composed of HJURP, CENPA and histone H4, where HJURP interacts with the dimer formed by CENPA and histone H4 and prevents tetramerization of CENPA and H4. Component of the CENPA-NAC complex, at least composed of CENPA, CENPC, CENPH, CENPM, CENPN, CENPT and CENPU. Interacts (via CATD domain) with HJURP; the interaction is direct and is required for its localization to centromeres. Interacts with CENPC, CENPN and CENPT; interaction is direct. Part of a centromere complex consisting of CENPA, CENPT and CENPW. Identified in centromere complexes containing histones H2A, H2B and H4, and at least CENPA, CENPB, CENPC, CENPT, CENPN, HJURP, SUPT16H, SSRP1 and RSF1. Can self-associate. The CENPA-H4 heterotetramer can bind DNA by itself (in vitro). Interacts with CDK1, PPP1CA and RBBP7. In terms of processing, trimethylated by NTMT1 at the N-terminal glycine after cleavage of Met-1. Methylation is low before incorporation into nucleosomes and increases with cell cycle progression, with the highest levels in mitotic nucleosomes. Post-translationally, phosphorylated by CDK1 at Ser-57 during early mitosis; this abolishes association with chromatin and centromeres, prevents interaction with HJURP and thereby prevents premature assembly of CENPA into centromeres. Dephosphorylated at Ser-57 by PPP1CA during late mitosis. Poly-ADP-ribosylated by PARP1.

It localises to the nucleus. The protein resides in the chromosome. The protein localises to the centromere. Histone H3-like nucleosomal protein that is specifically found in centromeric nucleosomes. Replaces conventional H3 in the nucleosome core of centromeric chromatin that serves as an assembly site for the inner kinetochore. The presence of CENPA subtly modifies the nucleosome structure and the way DNA is wrapped around the nucleosome and gives rise to protruding DNA ends that are less well-ordered and rigid compared to nucleosomes containing histone H3. May serve as an epigenetic mark that propagates centromere identity through replication and cell division. Required for recruitment and assembly of kinetochore proteins, and as a consequence required for progress through mitosis, chromosome segregation and cytokinesis. The chain is Histone H3-like centromeric protein A (CENPA) from Cricetulus griseus (Chinese hamster).